A 271-amino-acid polypeptide reads, in one-letter code: MRNDVHLGHKARKRFGQNFLNDPYIIDGIVSSINPLPGQNLVEIGPGLGAITEPVGKLVDKFTVIELDRDLAERLRNHPDLAEKLTIYEGDAMKFDFEQLVKPNNKLRIFGNLPYNISTPLMFHLFEFHKDVQDMHFMLQKEVVNRLAAGPGTKAYGRLTVMAQYYCKVTPVLEVPPTAFVPPPKVDSAVVRLQPYEVLPYPAKDLKWLDRVCREGFNQRRKTVRNCYKSLIDKEVLEELGVNPGMRPENLTLEQFVDMANWLHDSHNADK.

The S-adenosyl-L-methionine site is built by Asn-18, Leu-20, Gly-45, Glu-66, Asp-91, and Asn-112.

The protein belongs to the class I-like SAM-binding methyltransferase superfamily. rRNA adenine N(6)-methyltransferase family. RsmA subfamily.

It localises to the cytoplasm. The enzyme catalyses adenosine(1518)/adenosine(1519) in 16S rRNA + 4 S-adenosyl-L-methionine = N(6)-dimethyladenosine(1518)/N(6)-dimethyladenosine(1519) in 16S rRNA + 4 S-adenosyl-L-homocysteine + 4 H(+). In terms of biological role, specifically dimethylates two adjacent adenosines (A1518 and A1519) in the loop of a conserved hairpin near the 3'-end of 16S rRNA in the 30S particle. May play a critical role in biogenesis of 30S subunits. The protein is Ribosomal RNA small subunit methyltransferase A of Vibrio atlanticus (strain LGP32) (Vibrio splendidus (strain Mel32)).